We begin with the raw amino-acid sequence, 446 residues long: 5-methylthioadenosine/S-adenosylhomocysteine deaminase (446 aa).

Residues His72 and His74 each coordinate Zn(2+). The substrate site is built by Glu101 and His194. His221 contributes to the Zn(2+) binding site. Residues Glu224 and Asp309 each coordinate substrate. Position 309 (Asp309) interacts with Zn(2+).

This sequence belongs to the metallo-dependent hydrolases superfamily. MTA/SAH deaminase family. Requires Zn(2+) as cofactor.

It carries out the reaction S-adenosyl-L-homocysteine + H2O + H(+) = S-inosyl-L-homocysteine + NH4(+). It catalyses the reaction S-methyl-5'-thioadenosine + H2O + H(+) = S-methyl-5'-thioinosine + NH4(+). Its function is as follows. Catalyzes the deamination of 5-methylthioadenosine and S-adenosyl-L-homocysteine into 5-methylthioinosine and S-inosyl-L-homocysteine, respectively. Is also able to deaminate adenosine. This chain is 5-methylthioadenosine/S-adenosylhomocysteine deaminase, found in Saccharophagus degradans (strain 2-40 / ATCC 43961 / DSM 17024).